We begin with the raw amino-acid sequence, 522 residues long: MLDNKFGFKQRVASLRWLSAAIMLSVSAVPAWAFSIDDVAQQAEKLSQKGFEAPKSNLPAQFRDMKFADYQQIRFNNDKSYWNNVQTPFKLQFYHQGMYFDTPVKINEVTATTVDEIKYSPEYFDFGSVNHDAEAVKNLGFAGFKVLYPINKADKNDEIVSMLGASYFRVVGKGQIYGLSARGLAIDTALPSGEEFPRFREFWIERPKPNDKHLVIYALLDSPRAAGAYRFTVYPGRDSVVDVQAKVFLRDKVGKLGIAPLTSMYLFGPNQPSPTLNYRPALNDSNGLSIHAGNGEWIWRPLNNPKHLSVSTYAVENPKGFGLLQRGRDFTAYEDLDDRYDLRPSGWVEPKGEWGKGKVELVEIPTADETNDNIVAFWTPDVLPETGKPLDIKYRLHFTRDEDQLHSPNIAYVQQTRRSAGDVKQSNLIRQPDGTIAYIVDFVGPNLKELDESTPVASQVSIGDNGEIVENNVRYNPVTHGWRLTLRLRVKDAKQPTEMRAALVNGETTLTETWSNQLPANE.

The N-terminal stretch at Met-1–Ala-33 is a signal peptide.

Belongs to the OpgD/OpgG family.

It is found in the periplasm. The protein operates within glycan metabolism; osmoregulated periplasmic glucan (OPG) biosynthesis. In terms of biological role, involved in the biosynthesis of osmoregulated periplasmic glucans (OPGs). The protein is Glucans biosynthesis protein G of Pectobacterium carotovorum subsp. carotovorum (strain PC1).